Consider the following 172-residue polypeptide: uncharacterized protein (172 aa).

The protein belongs to the archaeal NMN adenylyltransferase family.

This is an uncharacterized protein from Aeropyrum pernix (strain ATCC 700893 / DSM 11879 / JCM 9820 / NBRC 100138 / K1).